A 494-amino-acid chain; its full sequence is MAEIEELNDQMKVRREKMGNLHDAGIDPFGHKFTRTHNSQELHEAYDEKTKEELHELALSGIVAGRLMTKRGKGKVGFAHLQDREGQIQLYVRKDEVGEENYEIFKKADLGDFLGVEGEIMKTDMGELSIKAKKLTFLSKALRPLPEKFHGLTDTETRYRKRYLDLISNKESFNRFVTRSKIISEIRRYMDGRGYLEVETPVLNNEAGGASARPFYTHHNSLDIDMALRIATELHLKRLIVGGMEKVYELGRVFRNEGMDMTHNPEFTTMESYEAYADFEDIMDLTEGIFQHVAKTVVGQDVLEYDGKEINVGGKFKRVHMVDAIKEVAGVDFWPEMTFEEATALAKEHDIHVEKHFTSVGHIINEFFEKYVEETLIQPTFVFGHPKEISPLAKMNEKDPRFTDRFELFINGKEYANAFSELNDPIDQLERFEAQAKAKELGDDEATGVDYDYVEALEHGMPPTGGLGIGIDRLVMLFTGTTSIRDVLLFPTMK.

Positions 407 and 414 each coordinate Mg(2+).

This sequence belongs to the class-II aminoacyl-tRNA synthetase family. Homodimer. Requires Mg(2+) as cofactor.

The protein resides in the cytoplasm. It carries out the reaction tRNA(Lys) + L-lysine + ATP = L-lysyl-tRNA(Lys) + AMP + diphosphate. The chain is Lysine--tRNA ligase from Lactococcus lactis subsp. cremoris (strain SK11).